A 428-amino-acid polypeptide reads, in one-letter code: Serine--tRNA ligase (428 aa).

231-233 (TAE) is an L-serine binding site. ATP is bound by residues 262-264 (RRE) and V278. E285 serves as a coordination point for L-serine. 349–352 (EVSS) contacts ATP. S384 contacts L-serine.

This sequence belongs to the class-II aminoacyl-tRNA synthetase family. Type-1 seryl-tRNA synthetase subfamily. In terms of assembly, homodimer. The tRNA molecule binds across the dimer.

The protein resides in the cytoplasm. The catalysed reaction is tRNA(Ser) + L-serine + ATP = L-seryl-tRNA(Ser) + AMP + diphosphate + H(+). It catalyses the reaction tRNA(Sec) + L-serine + ATP = L-seryl-tRNA(Sec) + AMP + diphosphate + H(+). It participates in aminoacyl-tRNA biosynthesis; selenocysteinyl-tRNA(Sec) biosynthesis; L-seryl-tRNA(Sec) from L-serine and tRNA(Sec): step 1/1. In terms of biological role, catalyzes the attachment of serine to tRNA(Ser). Is also able to aminoacylate tRNA(Sec) with serine, to form the misacylated tRNA L-seryl-tRNA(Sec), which will be further converted into selenocysteinyl-tRNA(Sec). This Chlamydia muridarum (strain MoPn / Nigg) protein is Serine--tRNA ligase.